Consider the following 168-residue polypeptide: Photosystem I assembly protein Ycf3 (168 aa).

TPR repeat units follow at residues 35–68, 72–105, and 120–153; these read AFTY…EIDP, SYIL…NPFL, and GEQA…TPGN.

Belongs to the Ycf3 family.

The protein localises to the plastid membrane. In terms of biological role, essential for the assembly of the photosystem I (PSI) complex. May act as a chaperone-like factor to guide the assembly of the PSI subunits. The sequence is that of Photosystem I assembly protein Ycf3 from Cuscuta reflexa (Southern Asian dodder).